Consider the following 439-residue polypeptide: MLICLTASHHNASFEVLEKLSVAAPSVAGALMEQNDFIAGAVVLATCNRFEAYLDVEEPLTAARALAVEATVDVVSGASGIARDDVRGSVDVKCGDAVAEHLFAVSSGLESVVVGEGEIAGQVRRALEGARTGGTTSTGLERLFQTASNTSRGVKTRTGLQSAGRSMVRLALDLAESRIADWSATRVLLVGTGAYAGASLAALRDRGVVDVHVYSPSGRAQKFAGPHGIPAVEGRDLLRALAASDMVVTCSTAPTAVLAAHHMQGAAAVSGDGRRRLVIDLGLPRNVDPDVVTVDGVELLDLETISLHAPLRDLTATDDAREIVSTAAAEFRAASAEDEVAPAVVALRTHIFDVLEGELERVRKRGDSSDATEKALRHLVSVLVHQPSVRARELARQGEGARVVDAVQALFGLDVEMPAAVSSPVAVALSRTAEAGQAS.

Substrate contacts are provided by residues 46 to 49 (TCNR), Ser111, 116 to 118 (EGE), and Gln122. The active-site Nucleophile is Cys47. An NADP(+)-binding site is contributed by 191 to 196 (GTGAYA).

This sequence belongs to the glutamyl-tRNA reductase family. As to quaternary structure, homodimer.

The catalysed reaction is (S)-4-amino-5-oxopentanoate + tRNA(Glu) + NADP(+) = L-glutamyl-tRNA(Glu) + NADPH + H(+). Its pathway is porphyrin-containing compound metabolism; protoporphyrin-IX biosynthesis; 5-aminolevulinate from L-glutamyl-tRNA(Glu): step 1/2. Functionally, catalyzes the NADPH-dependent reduction of glutamyl-tRNA(Glu) to glutamate 1-semialdehyde (GSA). The chain is Glutamyl-tRNA reductase from Clavibacter michiganensis subsp. michiganensis (strain NCPPB 382).